A 96-amino-acid chain; its full sequence is Protein RnfH (96 aa).

The protein belongs to the UPF0125 (RnfH) family.

This chain is Protein RnfH, found in Escherichia coli O81 (strain ED1a).